Here is a 190-residue protein sequence, read N- to C-terminus: Dynein axonemal light chain 1 (190 aa).

Alanine 2 carries the N-acetylalanine modification. LRR repeat units follow at residues 49–70, 71–92, 94–115, and 116–137; these read NCEKLSLSTNCIEKIANLNGLK, NLRILSLGRNNIKNLNGLEAVG, TLEELWISYNFIEKLKGIHVMK, and KLKILYMSNNLVKDWAEFVKLA. Serine 56 is subject to Phosphoserine. Positions 150 to 190 constitute an LRRCT domain; it reads NPLEEKHSAEGNWVEEATKRVPKLKKLDGTPVIKEDEEEDN.

The protein belongs to the dynein light chain LC1-type family. Interacts with ZMYND10 (via C-terminus). Interacts with DNAH5, a outer arm dynein heavy chain. Interacts with tubulin located within the A-tubule of the outer doublets in a ATP-independent manner.

Its subcellular location is the cytoplasm. The protein resides in the cytoskeleton. The protein localises to the cilium axoneme. Part of the multisubunit axonemal ATPase complexes that generate the force for cilia motility and govern beat frequency. Component of the outer arm dynein (ODA). May be involved in a mechanosensory feedback mechanism controlling ODA activity based on external conformational cues by tethering the outer arm dynein heavy chain (DNAH5) to the microtubule within the axoneme. Important for ciliary function in the airways and for the function of the cilia that produce the nodal flow essential for the determination of the left-right asymmetry. This is Dynein axonemal light chain 1 (DNAL1) from Bos taurus (Bovine).